The chain runs to 454 residues: Toxin CfTX-A (454 aa).

Residues Met1–Gly18 form the signal peptide. Positions Asn19–Arg25 are excised as a propeptide. The stretch at Val27–Glu61 forms a coiled coil.

The protein belongs to the jellyfish toxin family. Type II subfamily. As to quaternary structure, oligomer. Post-translationally, contains 2 disulfide bonds. In terms of tissue distribution, nematocytes.

The protein localises to the secreted. It localises to the nematocyst. Its subcellular location is the target cell membrane. In terms of biological role, the fraction containing this toxin and CfTX-A shows potent hemolytic activity. This fraction causes minor effects on the cardiovascular system of anesthetized rats (at 25 ug/kg), since it has no significant effects on heart rate but produces relatively small increases in mean arterial pressure. In Chironex fleckeri (Australian box jellyfish), this protein is Toxin CfTX-A.